The primary structure comprises 131 residues: Large-conductance mechanosensitive channel (131 aa).

Helical transmembrane passes span 14-34 (VIDL…VTSL) and 67-87 (GSFI…FIFI).

Belongs to the MscL family. As to quaternary structure, homopentamer.

The protein resides in the cell membrane. Channel that opens in response to stretch forces in the membrane lipid bilayer. May participate in the regulation of osmotic pressure changes within the cell. The protein is Large-conductance mechanosensitive channel of Bacillus pumilus (strain SAFR-032).